Here is a 308-residue protein sequence, read N- to C-terminus: Exosporium protein A (308 aa).

The protein resides in the spore wall. This chain is Exosporium protein A, found in Clostridium sporogenes (strain ATCC 15579).